A 160-amino-acid chain; its full sequence is MTFSLIVATTLNNVIGKDNQMPWHLPADLAWFRQNTTGKPVIMGRKTFESIGRPLPKRTNIVLSRQLFEHEGVIWKDSFESAVNFVRDFDEIMLIGGGELFKQYLPKADKLYLTQIQTELDGDTFFPQLNWEEWEIEFDEYRKADEQNRYDCRFLILTRK.

The region spanning 2 to 159 (TFSLIVATTL…YDCRFLILTR (158 aa)) is the DHFR domain. Residue Ile6 coordinates substrate. NADP(+)-binding positions include Ala8 and 14–20 (VIGKDNQ). Position 28 (Asp28) interacts with substrate. Residue 46-47 (KT) participates in NADP(+) binding. Arg53 and Arg58 together coordinate substrate. NADP(+) contacts are provided by residues 64–65 (SR) and 96–103 (GGGELFKQ). Thr114 provides a ligand contact to substrate.

Belongs to the dihydrofolate reductase family.

The enzyme catalyses (6S)-5,6,7,8-tetrahydrofolate + NADP(+) = 7,8-dihydrofolate + NADPH + H(+). It functions in the pathway cofactor biosynthesis; tetrahydrofolate biosynthesis; 5,6,7,8-tetrahydrofolate from 7,8-dihydrofolate: step 1/1. Functionally, key enzyme in folate metabolism. Catalyzes an essential reaction for de novo glycine and purine synthesis, and for DNA precursor synthesis. The protein is Dihydrofolate reductase (folA) of Haemophilus influenzae (strain ATCC 51907 / DSM 11121 / KW20 / Rd).